The sequence spans 258 residues: Imidazole glycerol phosphate synthase subunit HisF (258 aa).

Active-site residues include Asp-11 and Asp-130.

This sequence belongs to the HisA/HisF family. Heterodimer of HisH and HisF.

Its subcellular location is the cytoplasm. The catalysed reaction is 5-[(5-phospho-1-deoxy-D-ribulos-1-ylimino)methylamino]-1-(5-phospho-beta-D-ribosyl)imidazole-4-carboxamide + L-glutamine = D-erythro-1-(imidazol-4-yl)glycerol 3-phosphate + 5-amino-1-(5-phospho-beta-D-ribosyl)imidazole-4-carboxamide + L-glutamate + H(+). Its pathway is amino-acid biosynthesis; L-histidine biosynthesis; L-histidine from 5-phospho-alpha-D-ribose 1-diphosphate: step 5/9. IGPS catalyzes the conversion of PRFAR and glutamine to IGP, AICAR and glutamate. The HisF subunit catalyzes the cyclization activity that produces IGP and AICAR from PRFAR using the ammonia provided by the HisH subunit. The sequence is that of Imidazole glycerol phosphate synthase subunit HisF from Lachnoclostridium phytofermentans (strain ATCC 700394 / DSM 18823 / ISDg) (Clostridium phytofermentans).